The following is an 807-amino-acid chain: Glucocorticoid receptor (807 aa).

Disordered regions lie at residues 1-47 (MDQG…LPSP), 246-284 (TDVN…QHQQ), and 412-438 (FSVS…SKPS). Positions 1-444 (MDQGGLKRNC…SKPSGPTHKI (444 aa)) are modulating. The span at 257 to 282 (LQHHQHQQQQHRHLLQHQQHQLHHQH) shows a compositional bias: basic residues. Over residues 412 to 421 (FSVSFSSSSP) the composition is skewed to low complexity. 2 consecutive NR C4-type zinc fingers follow at residues 445–465 (CLVC…CGSC) and 490–514 (CAGR…FRKC). The nuclear receptor DNA-binding region spans 445–519 (CLVCSDEASG…RFRKCLQAGM (75 aa)). The segment at 520–553 (NLEARKNKKLIKMKVHRPTGSAEPISNMPVPVIP) is hinge. Residues 554–788 (RMPQLVPTML…FPEMLAEIIT (235 aa)) form the NR LBD domain.

Belongs to the nuclear hormone receptor family. NR3 subfamily. Heteromultimeric cytoplasmic complex with HSP90. Upon ligand binding the complex undergoes a conformation change and moves to the nucleus, where it dissociates. Binds to DNA as a homodimer, and as heterodimer with NR3C2. Interaction with numerous other transcription factors modulates transcription activation.

The protein localises to the cytoplasm. It is found in the nucleus. Its subcellular location is the mitochondrion. The protein resides in the cytoskeleton. It localises to the spindle. The protein localises to the microtubule organizing center. It is found in the centrosome. Its function is as follows. Receptor for glucocorticoids (GC). Has a dual mode of action: as a transcription factor that binds to glucocorticoid response elements (GRE), both for nuclear and mitochondrial DNA, and as a modulator of other transcription factors. Affects inflammatory responses, cellular proliferation and differentiation in target tissues. Involved in chromatin remodeling. Plays a role in rapid mRNA degradation by binding to the 5' UTR of target mRNAs and interacting with PNRC2 in a ligand-dependent manner which recruits the RNA helicase UPF1 and the mRNA-decapping enzyme DCP1A, leading to RNA decay. Could act as a coactivator for STAT5-dependent transcription upon growth hormone (GH) stimulation and could reveal an essential role of hepatic GR in the control of body growth. Mediates glucocorticoid-induced apoptosis. Promotes accurate chromosome segregation during mitosis. May act as a tumor suppressor. May play a negative role in adipogenesis through the regulation of lipolytic and antilipogenic gene expression. In Paralichthys olivaceus (Bastard halibut), this protein is Glucocorticoid receptor (nr3c1).